Reading from the N-terminus, the 1250-residue chain is Protein SSD1 (1250 aa).

Polar residues predominate over residues 1–22 (MSKNSNVNNNRSQEPNNMFVQT). The disordered stretch occupies residues 1-32 (MSKNSNVNNNRSQEPNNMFVQTTGGGKNAPKQ). At Ser-2 the chain carries N-acetylserine. Position 40 is a phosphoserine (Ser-40). The tract at residues 79–163 (TGQYLSGNSG…SSIYGHSRRH (85 aa)) is disordered. The segment covering 84-94 (SGNSGSNNHFT) has biased composition (polar residues). Residues 124–145 (NNSGYYHNSYDNNNNSNNPGSN) are compositionally biased toward low complexity. Phosphoserine is present on residues Ser-164 and Ser-183. The span at 197-208 (QADSGSNSTTEQ) shows a compositional bias: polar residues. 3 disordered regions span residues 197–338 (QADS…GGRK), 418–443 (KEKEEKKRRKDASMQHDLIPLNSSDD), and 455–517 (SNNF…DDVE). Position 227 is a phosphothreonine (Thr-227). Residues 264–276 (NEYSPGINSNWRN) show a composition bias toward polar residues. A compositionally biased stretch (low complexity) spans 277–287 (QSQQPQQQLSP). 2 positions are modified to phosphoserine: Ser-286 and Ser-322. The span at 319–329 (SNSSVHSFSSQ) shows a compositional bias: polar residues. Positions 481 to 495 (STINNDSDSLSSPTK) are enriched in polar residues. Phosphoserine occurs at positions 491 and 492. Residues 497-510 (GVRRRSSLKQRPTQ) show a composition bias toward basic residues. One can recognise a CSD2 domain in the interval 582-657 (AWFKPTDKKV…EIDSILRDNN (76 aa)). A Phosphotyrosine modification is found at Tyr-688. The region spanning 694–1015 (DTNEYNIFAI…VHRQLKAVIH (322 aa)) is the RNB domain. Residues 1064 to 1148 (GQLLTMATVL…SIKNKFRSTA (85 aa)) enclose the DIS3L2 C-terminal domain.

Belongs to the RNR ribonuclease family.

Can suppress the lethality due to deletion of SIT4, and partially the defects due to BCY1 disruption. Is implicated in the control of the cell cycle G1 phase. This is Protein SSD1 (SSD1) from Saccharomyces cerevisiae (strain ATCC 204508 / S288c) (Baker's yeast).